A 466-amino-acid polypeptide reads, in one-letter code: Sulfate adenylyltransferase subunit 1 (466 aa).

The 216-residue stretch at 22–237 folds into the tr-type G domain; the sequence is KELVRFLTCG…LNTIDVKTQE (216 aa). Residues 31–38 are G1; the sequence is GSVDDGKS. Residue 31–38 participates in GTP binding; sequence GSVDDGKS. The segment at 89–93 is G2; sequence GITID. The interval 110–113 is G3; sequence DTPG. Residues 110-114 and 165-168 each bind GTP; these read DTPGH and NKMD. Residues 165–168 form a G4 region; the sequence is NKMD. The segment at 202-204 is G5; it reads SAL.

This sequence belongs to the TRAFAC class translation factor GTPase superfamily. Classic translation factor GTPase family. CysN/NodQ subfamily. In terms of assembly, heterodimer composed of CysD, the smaller subunit, and CysN.

It carries out the reaction sulfate + ATP + H(+) = adenosine 5'-phosphosulfate + diphosphate. The protein operates within sulfur metabolism; hydrogen sulfide biosynthesis; sulfite from sulfate: step 1/3. With CysD forms the ATP sulfurylase (ATPS) that catalyzes the adenylation of sulfate producing adenosine 5'-phosphosulfate (APS) and diphosphate, the first enzymatic step in sulfur assimilation pathway. APS synthesis involves the formation of a high-energy phosphoric-sulfuric acid anhydride bond driven by GTP hydrolysis by CysN coupled to ATP hydrolysis by CysD. The polypeptide is Sulfate adenylyltransferase subunit 1 (Colwellia psychrerythraea (strain 34H / ATCC BAA-681) (Vibrio psychroerythus)).